We begin with the raw amino-acid sequence, 401 residues long: Putative F-box/FBD/LRR-repeat protein At3g23955 (401 aa).

Residues 56–102 (VPARFQLPDPLLTQILNHLPTEEAVKTSVLSTRWRTLWLWVHNLELS) enclose the F-box domain. 2 LRR repeats span residues 128 to 152 (IESL…AFVK) and 275 to 296 (MSSL…FLRS). The region spanning 321–373 (IKRVSISSVPECLLSSLEFVEFKAPICGLAPEMMLVWYFLENSPTLKKLTLRL) is the FBD domain.

This Arabidopsis thaliana (Mouse-ear cress) protein is Putative F-box/FBD/LRR-repeat protein At3g23955.